A 525-amino-acid polypeptide reads, in one-letter code: Phosphoenolpyruvate carboxykinase (ATP) (525 aa).

Substrate contacts are provided by arginine 54, tyrosine 190, and lysine 196. ATP-binding positions include lysine 196, histidine 215, and 231–239 (GLSGTGKTT). Lysine 196 and histidine 215 together coordinate Mn(2+). A Mn(2+)-binding site is contributed by aspartate 252. Positions 280, 316, and 441 each coordinate ATP. Arginine 316 contacts substrate.

It belongs to the phosphoenolpyruvate carboxykinase (ATP) family. Mn(2+) serves as cofactor.

It is found in the cytoplasm. The enzyme catalyses oxaloacetate + ATP = phosphoenolpyruvate + ADP + CO2. The protein operates within carbohydrate biosynthesis; gluconeogenesis. Functionally, involved in the gluconeogenesis. Catalyzes the conversion of oxaloacetate (OAA) to phosphoenolpyruvate (PEP) through direct phosphoryl transfer between the nucleoside triphosphate and OAA. This is Phosphoenolpyruvate carboxykinase (ATP) from Nitratiruptor sp. (strain SB155-2).